We begin with the raw amino-acid sequence, 283 residues long: MSKTYQATGIILKGMPLGEADRLVTILTSEYGLIQAVVPGARKHKSRLRGRSELFVVNQLLIVKGRSLDKLIQAETLESYPGLSRDLGKLTASQYLAELVLSLALCEQPQIELYELLNEHLRRIEQKATPQTLYPHLAQAVFHLLAIAGVAPQVYQCCLSREPIETNFIDSLWRVGFSFESGGAINLSSDRRQPFQPSDDLKKEIFLNKLNWKLTAVELTLLQQLGQKFLPQAYDIFPMDVAISSIDVAWIKIERILREYAQYHFGRSFRSATLVDTLAPVDF.

The protein belongs to the RecO family.

In terms of biological role, involved in DNA repair and RecF pathway recombination. The chain is DNA repair protein RecO from Gloeothece citriformis (strain PCC 7424) (Cyanothece sp. (strain PCC 7424)).